The chain runs to 127 residues: Large ribosomal subunit protein bL12 (127 aa).

Belongs to the bacterial ribosomal protein bL12 family. As to quaternary structure, homodimer. Part of the ribosomal stalk of the 50S ribosomal subunit. Forms a multimeric L10(L12)X complex, where L10 forms an elongated spine to which 2 to 4 L12 dimers bind in a sequential fashion. Binds GTP-bound translation factors.

Functionally, forms part of the ribosomal stalk which helps the ribosome interact with GTP-bound translation factors. Is thus essential for accurate translation. The sequence is that of Large ribosomal subunit protein bL12 from Syntrophotalea carbinolica (strain DSM 2380 / NBRC 103641 / GraBd1) (Pelobacter carbinolicus).